We begin with the raw amino-acid sequence, 149 residues long: Putative pre-16S rRNA nuclease (149 aa).

It belongs to the YqgF nuclease family.

It localises to the cytoplasm. Functionally, could be a nuclease involved in processing of the 5'-end of pre-16S rRNA. In Cupriavidus metallidurans (strain ATCC 43123 / DSM 2839 / NBRC 102507 / CH34) (Ralstonia metallidurans), this protein is Putative pre-16S rRNA nuclease.